The chain runs to 225 residues: Phosphoribosyltransferase domain-containing protein 1 (225 aa).

Residue Ala2 is modified to N-acetylalanine. Mg(2+) is bound by residues Glu141 and Asp142. Residues 141 to 149 (EDVVGTGRT), Lys173, 194 to 195 (FV), and Asp201 each bind GMP. Asp201 lines the Mg(2+) pocket.

Belongs to the purine/pyrimidine phosphoribosyltransferase family. Homodimer.

Has low, barely detectable phosphoribosyltransferase activity (in vitro). Binds GMP, IMP and alpha-D-5-phosphoribosyl 1-pyrophosphate (PRPP). Is not expected to contribute to purine metabolism or GMP salvage. This is Phosphoribosyltransferase domain-containing protein 1 (PRTFDC1) from Homo sapiens (Human).